Consider the following 367-residue polypeptide: Bi-functional coumaroyl CoA and feruloyl CoA ortho-hydroxylase Diox4 (367 aa).

The Fe2OG dioxygenase domain maps to Ile-207 to Pro-317. Tyr-223 lines the 2-oxoglutarate pocket. Fe cation is bound by residues His-238, Asp-240, and His-298. Residues Arg-308 and Ser-310 each coordinate 2-oxoglutarate.

This sequence belongs to the iron/ascorbate-dependent oxidoreductase family. The cofactor is L-ascorbate. Fe(2+) serves as cofactor.

The catalysed reaction is (E)-4-coumaroyl-CoA + 2-oxoglutarate + O2 = (E)-2,4-dihydroxycinnamoyl-CoA + succinate + CO2. It carries out the reaction (E)-feruloyl-CoA + 2-oxoglutarate + O2 = (E)-6-hydroxyferuloyl-CoA + succinate + CO2. The protein operates within phenylpropanoid metabolism. Its activity is regulated as follows. Repressed by the competitive inhibitor psoralen, but not by umbelliferone, xanthotoxin, bergapten and isopimpinellin. In terms of biological role, 2-oxoglutarate (OG)- and Fe(II)-dependent dioxygenase (2OGD) involved in scopoletin and umbelliferone biosynthesis. Converts feruloyl CoA into 6'-hydroxyferuloyl CoA, and p-coumaroyl CoA into 2,4-dihydroxycinnamoyl-CoA. Has no activity with cinnamic acid, caffeic acid, p-coumaric acid, ferulic acid, cinnamoyl-CoA and caffeoyl-CoA. The protein is Bi-functional coumaroyl CoA and feruloyl CoA ortho-hydroxylase Diox4 of Ruta graveolens (Common rue).